Reading from the N-terminus, the 63-residue chain is Kurtoxin-like II (63 aa).

One can recognise an LCN-type CS-alpha/beta domain in the interval I2 to R62. Disulfide bonds link C12/C61, C16/C37, C23/C44, and C27/C46.

Belongs to the long (4 C-C) scorpion toxin superfamily. Sodium channel inhibitor family. Alpha subfamily. As to expression, expressed by the venom gland.

Its subcellular location is the secreted. In terms of biological role, this neurotoxin acts on sodium and calcium channels. Potently inhibits native voltage-gated T-type calcium channel activity in mouse male germ cells. Also binds Cav3.1/CACNA1G, Cav3.2/CACNA1H, and Cav3.3/CACNA1I T-type calcium channels and inhibits the channels by modifying voltage-dependent gating. In addition, binds and significantly inhibits the inactivation of activated sodium channels (Nav1.2/SCN2A and Nav1.5/SCN5A). This is Kurtoxin-like II from Parabuthus granulatus (Granulated thick-tailed scorpion).